We begin with the raw amino-acid sequence, 1388 residues long: Rho-associated protein kinase 2 (1388 aa).

Residues 1–27 (MSRPPPTGKMPGAPETAPGDGAGASRQ) are disordered. Positions 92–354 (YDVVKVIGRG…VEEIRQHPFF (263 aa)) constitute a Protein kinase domain. ATP is bound by residues 98-106 (IGRGAFGEV) and Lys-121. Asp-214 (proton acceptor) is an active-site residue. The AGC-kinase C-terminal domain maps to 357–425 (DQWHWDNIRE…YRENLLLSDS (69 aa)). The interval 363–784 (NIRETAAPVV…INELLKQKDV (422 aa)) is interaction with PPP1R12A. The tract at residues 373–420 (PELSSDIDSSNFDDIEDDKGDVETFPIPKAFVGNQLPFIGFTYYRENL) is interaction with NPM1. At Thr-414 the chain carries Phosphothreonine; by ROCK2. 2 coiled-coil regions span residues 429 to 1024 (RETD…EKQL) and 1053 to 1131 (DTDV…IGLD). The REM-1 domain maps to 497–573 (ALRQLEREKA…LDETNALLRT (77 aa)). The residue at position 722 (Tyr-722) is a Phosphotyrosine; by SRC. Positions 979–1047 (TSDVANLANE…LAEIMNRKEP (69 aa)) constitute a RhoBD domain. The tract at residues 979–1047 (TSDVANLANE…LAEIMNRKEP (69 aa)) is RHOA binding. The residue at position 1137 (Ser-1137) is a Phosphoserine. Positions 1150–1349 (ESRLEGWLSL…WVSRLVKKIP (200 aa)) constitute a PH domain. At Thr-1212 the chain carries Phosphothreonine. The segment at 1260–1315 (GHEFIPTLYHFPTNCEACMKPLWHMFKPPPALECRRCHIKCHKDHMDKKEEIIAPC) adopts a Phorbol-ester/DAG-type zinc-finger fold. The interval 1345 to 1388 (VKKIPKKPPAPDPFARSSPRTSMKIQQNQSIRRPSRQLAPNKPS) is disordered. Phosphoserine occurs at positions 1362 and 1374. Positions 1362-1376 (SPRTSMKIQQNQSIR) are enriched in polar residues.

Belongs to the protein kinase superfamily. AGC Ser/Thr protein kinase family. As to quaternary structure, homodimer. Interacts with IRS1. Interacts with RAF1. Interacts with RHOA (activated by GTP), RHOB and RHOC. Interacts with PPP1R12A. Interacts with EP300. Interacts with CHORDC1. Interacts with BRCA2. Interacts with NPM1; this interaction enhances ROCK2 activity. Interacts with SORL1. Interacts with PJVK. Requires Mg(2+) as cofactor. In terms of processing, phosphorylation at Tyr-722 reduces its binding to RHOA and is crucial for focal adhesion dynamics. Dephosphorylation by PTPN11 stimulates its RHOA binding activity. Post-translationally, cleaved by granzyme B during apoptosis. This leads to constitutive activation of the kinase and membrane blebbing. In terms of tissue distribution, expressed in the brain (at protein level).

The protein resides in the cytoplasm. The protein localises to the cell membrane. Its subcellular location is the nucleus. It is found in the cytoskeleton. It localises to the microtubule organizing center. The protein resides in the centrosome. The enzyme catalyses L-seryl-[protein] + ATP = O-phospho-L-seryl-[protein] + ADP + H(+). It carries out the reaction L-threonyl-[protein] + ATP = O-phospho-L-threonyl-[protein] + ADP + H(+). Activated by RHOA binding. Inhibited by Y-27632. Functionally, protein kinase which is a key regulator of actin cytoskeleton and cell polarity. Involved in regulation of smooth muscle contraction, actin cytoskeleton organization, stress fiber and focal adhesion formation, neurite retraction, cell adhesion and motility via phosphorylation of ADD1, BRCA2, CNN1, EZR, DPYSL2, EP300, MSN, MYL9/MLC2, NPM1, RDX, PPP1R12A and VIM. Phosphorylates SORL1 and IRF4. Acts as a negative regulator of VEGF-induced angiogenic endothelial cell activation. Positively regulates the activation of p42/MAPK1-p44/MAPK3 and of p90RSK/RPS6KA1 during myogenic differentiation. Plays an important role in the timely initiation of centrosome duplication. Inhibits keratinocyte terminal differentiation. May regulate closure of the eyelids and ventral body wall through organization of actomyosin bundles. Plays a critical role in the regulation of spine and synaptic properties in the hippocampus. Plays an important role in generating the circadian rhythm of the aortic myofilament Ca(2+) sensitivity and vascular contractility by modulating the myosin light chain phosphorylation. In Homo sapiens (Human), this protein is Rho-associated protein kinase 2 (ROCK2).